A 214-amino-acid chain; its full sequence is Small ribosomal subunit protein uS5 (214 aa).

The S5 DRBM domain maps to 54-117 (LRYDIVDIGI…RDAKMRIIPV (64 aa)).

This sequence belongs to the universal ribosomal protein uS5 family. In terms of assembly, part of the 30S ribosomal subunit. Contacts protein S4.

Its function is as follows. With S4 and S12 plays an important role in translational accuracy. The polypeptide is Small ribosomal subunit protein uS5 (Sulfolobus acidocaldarius (strain ATCC 33909 / DSM 639 / JCM 8929 / NBRC 15157 / NCIMB 11770)).